We begin with the raw amino-acid sequence, 394 residues long: Nuclear hormone receptor family member nhr-18 (394 aa).

A DNA-binding region (nuclear receptor) is located at residues 8–83; that stretch reads SGSCEVCGDK…VGMDTRRFQT (76 aa). 2 consecutive NR C4-type zinc fingers follow at residues 11-31 and 48-71; these read CEVC…CRAC and CPNG…LKKC. Residues 134–394 enclose the NR LBD domain; sequence MLQKPTNHVL…FSHPEMFEAT (261 aa).

It belongs to the nuclear hormone receptor family.

Its subcellular location is the nucleus. Orphan nuclear receptor. The polypeptide is Nuclear hormone receptor family member nhr-18 (nhr-18) (Caenorhabditis elegans).